A 169-amino-acid chain; its full sequence is Dihydrofolate reductase type 8 (169 aa).

Residues 3–169 (ELHAILAATA…FTYRKKELTE (167 aa)) form the DHFR domain.

The protein belongs to the dihydrofolate reductase family. In terms of assembly, homodimer.

It carries out the reaction (6S)-5,6,7,8-tetrahydrofolate + NADP(+) = 7,8-dihydrofolate + NADPH + H(+). It functions in the pathway cofactor biosynthesis; tetrahydrofolate biosynthesis; 5,6,7,8-tetrahydrofolate from 7,8-dihydrofolate: step 1/1. Key enzyme in folate metabolism. Catalyzes an essential reaction for de novo glycine and purine synthesis, and for DNA precursor synthesis. The polypeptide is Dihydrofolate reductase type 8 (dhfrVIII) (Escherichia coli).